Here is a 435-residue protein sequence, read N- to C-terminus: Adenylosuccinate synthetase (435 aa).

Residues 22 to 28 (GDEGKGK) and 50 to 52 (GHT) each bind GTP. Asp23 serves as the catalytic Proton acceptor. The Mg(2+) site is built by Asp23 and Gly50. IMP-binding positions include 23–26 (DEGK), 48–51 (NAGH), Thr140, Arg154, Gln235, Thr250, and Arg314. His51 serves as the catalytic Proton donor. 310 to 316 (ATTGRKR) provides a ligand contact to substrate. Residues Arg316, 342-344 (KLD), and 424-426 (SVG) each bind GTP.

The protein belongs to the adenylosuccinate synthetase family. In terms of assembly, homodimer. Requires Mg(2+) as cofactor.

It is found in the cytoplasm. The enzyme catalyses IMP + L-aspartate + GTP = N(6)-(1,2-dicarboxyethyl)-AMP + GDP + phosphate + 2 H(+). It participates in purine metabolism; AMP biosynthesis via de novo pathway; AMP from IMP: step 1/2. Its function is as follows. Plays an important role in the de novo pathway of purine nucleotide biosynthesis. Catalyzes the first committed step in the biosynthesis of AMP from IMP. In Chlorobaculum parvum (strain DSM 263 / NCIMB 8327) (Chlorobium vibrioforme subsp. thiosulfatophilum), this protein is Adenylosuccinate synthetase.